The primary structure comprises 637 residues: Chaperone protein DnaK (637 aa).

Phosphothreonine; by autocatalysis is present on Thr-196. 2 disordered regions span residues 503 to 525 (AEIN…RKEE) and 598 to 637 (SGAG…DDKK). The segment covering 598-619 (SGAGAAQAQPEAPQNSGSSQSS) has biased composition (low complexity).

It belongs to the heat shock protein 70 family.

Its function is as follows. Acts as a chaperone. The sequence is that of Chaperone protein DnaK from Chlorobium chlorochromatii (strain CaD3).